Reading from the N-terminus, the 65-residue chain is Large ribosomal subunit protein bL35 (65 aa).

This sequence belongs to the bacterial ribosomal protein bL35 family.

The chain is Large ribosomal subunit protein bL35 from Edwardsiella ictaluri (strain 93-146).